The sequence spans 224 residues: MHGTDSSSDTPGQPAPSRAELLSAHAEGSISEDTILKTARDRAVDIGVGAVTPAVGALLSMLAKLSGGKAVAEVGTGAGVSGLWLLSGMSDDGVLTTIDIEPEHLRVAKQAFTEAGIGPSRTRLISGRAQEVLTRLADDSYDLVFVDADPIDQPDYVVEGVRLLRSGGVIVVHRAALGDRAGDPAVRDAEVTAVREAARLIAEDERLTPALVPLGDGVLAAVRD.

Residues 1–11 are compositionally biased toward polar residues; sequence MHGTDSSSDTP. The interval 1 to 20 is disordered; sequence MHGTDSSSDTPGQPAPSRAE. S-adenosyl-L-methionine contacts are provided by residues valine 51, glutamate 73, 75-76, serine 81, aspartate 99, and isoleucine 100; that span reads GT. A substrate-binding site is contributed by aspartate 147. Aspartate 149 serves as a coordination point for S-adenosyl-L-methionine.

It belongs to the class I-like SAM-binding methyltransferase superfamily. Cation-dependent O-methyltransferase family.

The polypeptide is Putative O-methyltransferase MUL_4520 (Mycobacterium ulcerans (strain Agy99)).